Consider the following 572-residue polypeptide: Urease subunit alpha (572 aa).

The 439-residue stretch at 134-572 (AGIDTHIHLI…AAMNQLYFFG (439 aa)) folds into the Urease domain. Residues His-139, His-141, and Lys-222 each contribute to the Ni(2+) site. Lys-222 bears the N6-carboxylysine mark. A substrate-binding site is contributed by His-224. Ni(2+) is bound by residues His-251 and His-277. His-325 acts as the Proton donor in catalysis. Asp-365 is a Ni(2+) binding site.

It belongs to the metallo-dependent hydrolases superfamily. Urease alpha subunit family. As to quaternary structure, heterotrimer of UreA (gamma), UreB (beta) and UreC (alpha) subunits. Three heterotrimers associate to form the active enzyme. The cofactor is Ni cation. Post-translationally, carboxylation allows a single lysine to coordinate two nickel ions.

It is found in the cytoplasm. The enzyme catalyses urea + 2 H2O + H(+) = hydrogencarbonate + 2 NH4(+). The protein operates within nitrogen metabolism; urea degradation; CO(2) and NH(3) from urea (urease route): step 1/1. The chain is Urease subunit alpha from Edwardsiella ictaluri (strain 93-146).